We begin with the raw amino-acid sequence, 182 residues long: NADH-ubiquinone oxidoreductase 20 kDa subunit (182 aa).

Residues cysteine 57, cysteine 58, cysteine 122, and cysteine 152 each contribute to the [4Fe-4S] cluster site.

This sequence belongs to the complex I 20 kDa subunit family. [4Fe-4S] cluster is required as a cofactor.

It localises to the mitochondrion. The catalysed reaction is a ubiquinone + NADH + 5 H(+)(in) = a ubiquinol + NAD(+) + 4 H(+)(out). This chain is NADH-ubiquinone oxidoreductase 20 kDa subunit (NAD10), found in Reclinomonas americana.